We begin with the raw amino-acid sequence, 1056 residues long: Potassium transporter TRK1 (1056 aa).

Over 1–46 (MLYRVSGFYKRHTRNFTNIDYGYYIRNFIHHIASKIYPYAKVVLPN) the chain is Cytoplasmic. Residues 47-67 (FRAAHYFYILTLVILGSILVY) traverse the membrane as a helical segment. Residues 68–73 (PVKTCA) are Extracellular-facing. The stretch at 74–90 (YIDVLFFTAGASTQAGL) is an intramembrane region. At 91-99 (NTVNVNDLS) the chain is on the extracellular side. The chain crosses the membrane as a helical span at residues 100-122 (LYQQIVLYLLATLATPIFIHGSL). Residues 123 to 622 (LFVRLYYFER…LGGIEYRAVK (500 aa)) are Cytoplasmic-facing. 3 disordered regions span residues 180 to 276 (REAE…IDPE), 290 to 350 (KNQE…EDED), and 404 to 571 (PWTS…SIEN). The segment covering 186-203 (SSSSPQSSSSQTSQPVST) has biased composition (low complexity). Residues 236–245 (EKIHFEEPQR) are compositionally biased toward basic and acidic residues. A compositionally biased stretch (polar residues) spans 335-344 (PATNSVGTGN). Low complexity predominate over residues 412-423 (TLSNSSKKGSLS). Composition is skewed to acidic residues over residues 428–449 (DTED…SDIS) and 469–487 (YEED…DDGE). The segment covering 521 to 533 (RSNTLDTPQQNTS) has biased composition (polar residues). The segment covering 537–549 (KIRKKAPKRKTPR) has biased composition (basic residues). Residues 553–563 (NASFNQHSNVS) are compositionally biased toward polar residues. The helical transmembrane segment at 623–646 (LLIKIIVVYYVGFNIIPGVMLSIW) threads the bilayer. Residues 647–665 (IYCMPHYKNLMISSSISPA) are Extracellular-facing. Residues 666–682 (WWAFFTSQSSFNDLGLT) lie within the membrane without spanning it. Over 683–693 (LTSNSMMSFNQ) the chain is Extracellular. Residues 694-710 (NAFVQILCSFLIVIGNT) traverse the membrane as a helical segment. Residues 711–754 (GFPILLRFIIWVMFKTARPLSLYKESLGFLLDHPRRCFTLLFPS) lie on the Cytoplasmic side of the membrane. Residues 755–778 (VPTWWLFFILVVLNGFDLVIFCIL) form a helical membrane-spanning segment. Over 779-793 (DLHDDTFKGVDMGYR) the chain is Extracellular. An intramembrane segment occupies 794–810 (VLNGLFQAFCTRTVGFS). Residues 811–817 (VMDLSQL) are Extracellular-facing. A helical transmembrane segment spans residues 818-841 (HAATQVSYLIMMYISVLPIAISVR). Residues 842-874 (RTNVYEEQSLGVYAKENAEGVDESAPSNYVGSH) lie on the Cytoplasmic side of the membrane. Residues 875-896 (LRNQLSYDLWYICLGLFIICIA) traverse the membrane as a helical segment. Residues 897-909 (EGKRLKEQDLRFS) lie on the Extracellular side of the membrane. Residues 910–928 (IFAVLFEIVSAYGTVGMSM) lie within the membrane without spanning it. Over 929–942 (GYPGVDCSLSGEFN) the chain is Extracellular. Residues 943–965 (VISKLVIIAMMIRGRHRGLPYTI) form a helical membrane-spanning segment. Residues 966 to 1056 (DRAIMLPNAA…RYVVRTVSEV (91 aa)) are Cytoplasmic-facing.

It belongs to the TrkH potassium transport family.

Its subcellular location is the cell membrane. The enzyme catalyses K(+)(in) = K(+)(out). It carries out the reaction chloride(in) = chloride(out). Its activity is regulated as follows. TRK1-mediated chloride conductance is blocked by 4,4'-diisothiocyanatostilbene-2,2'-disulfonic acid. Functionally, potassium transporter that mediates K(+) influx, as well as Cl(-) efflux as a secondary function. TRK1 is the major K(+) uptake transporter that regulates membrane potential and intracellular pH. The TRK1-mediated Cl(-) efflux should serve as a Cl(-) detoxification route and may play a role in sustaining C.albicans on mammalian epithelial surfaces, or in physiological saline solutions such as saliva. Mediates candidacidal activities of cysteine-free peptides, but not of defensins. The hallmark of salivary gland-secreted histatin-5 (Hst 5) killing of C.albicans is the rapid efflux of cellular ATP and other small nucleotides and ions from the cell as well as concurrent intracellular uptake of propidium iodide (PI). TRK1 is the channel for Hst 5-induced killing and histatin-5 may directly or indirectly alter TRK1 function, allowing the efflux of larger anions, including ATP, and the influx of small cationic dyes, such as PI. In Candida albicans (strain SC5314 / ATCC MYA-2876) (Yeast), this protein is Potassium transporter TRK1.